Here is a 230-residue protein sequence, read N- to C-terminus: Ribonuclease HII (230 aa).

The 192-residue stretch at glycine 21 to glycine 212 folds into the RNase H type-2 domain. Residues aspartate 27, glutamate 28, and aspartate 121 each contribute to the a divalent metal cation site.

This sequence belongs to the RNase HII family. Requires Mn(2+) as cofactor. It depends on Mg(2+) as a cofactor.

Its subcellular location is the cytoplasm. It carries out the reaction Endonucleolytic cleavage to 5'-phosphomonoester.. Endonuclease that specifically degrades the RNA of RNA-DNA hybrids. The protein is Ribonuclease HII of Mycobacterium avium (strain 104).